A 178-amino-acid polypeptide reads, in one-letter code: Putative peroxiredoxin in rubredoxin operon (178 aa).

The Thioredoxin domain maps to R3–T163. The Cysteine sulfenic acid (-SOH) intermediate role is filled by C50.

It belongs to the peroxiredoxin family. AhpC/Prx1 subfamily. In terms of assembly, homodimer; disulfide-linked, upon oxidation.

The protein resides in the cytoplasm. It carries out the reaction a hydroperoxide + [protein]-dithiol = [protein]-disulfide + an alcohol + H2O. In terms of biological role, thiol-specific peroxidase that catalyzes the reduction of hydrogen peroxide and organic hydroperoxides to water and alcohols, respectively. Plays a role in cell protection against oxidative stress by detoxifying peroxides. In Clostridium pasteurianum, this protein is Putative peroxiredoxin in rubredoxin operon.